The primary structure comprises 555 residues: Urocanate hydratase (555 aa).

Residues 51 to 52 (GG), Gln-129, 175 to 177 (GMG), Glu-195, Arg-200, 241 to 242 (NA), 262 to 266 (QTSAH), 272 to 273 (YL), and Tyr-321 each bind NAD(+). The active site involves Cys-409. Gly-491 contacts NAD(+).

The protein belongs to the urocanase family. Requires NAD(+) as cofactor.

Its subcellular location is the cytoplasm. It catalyses the reaction 4-imidazolone-5-propanoate = trans-urocanate + H2O. It participates in amino-acid degradation; L-histidine degradation into L-glutamate; N-formimidoyl-L-glutamate from L-histidine: step 2/3. In terms of biological role, catalyzes the conversion of urocanate to 4-imidazolone-5-propionate. This chain is Urocanate hydratase, found in Rhizorhabdus wittichii (strain DSM 6014 / CCUG 31198 / JCM 15750 / NBRC 105917 / EY 4224 / RW1) (Sphingomonas wittichii).